The following is a 228-amino-acid chain: Urease accessory protein UreF (228 aa).

This sequence belongs to the UreF family. In terms of assembly, ureD, UreF and UreG form a complex that acts as a GTP-hydrolysis-dependent molecular chaperone, activating the urease apoprotein by helping to assemble the nickel containing metallocenter of UreC. The UreE protein probably delivers the nickel.

The protein resides in the cytoplasm. Functionally, required for maturation of urease via the functional incorporation of the urease nickel metallocenter. The chain is Urease accessory protein UreF from Brucella ovis (strain ATCC 25840 / 63/290 / NCTC 10512).